Reading from the N-terminus, the 651-residue chain is p-hydroxybenzoic acid efflux pump subunit AaeB (651 aa).

The next 11 helical transmembrane spans lie at 11–31, 41–61, 67–87, 91–111, 119–139, 150–170, 368–388, 405–425, 429–449, 460–480, and 481–501; these read FAFK…HLQL, AAIV…SGAI, LRII…VLTI, VLTL…SSLV, FGLA…TPLL, EIVL…PRSI, LFWL…IAVV, FLLG…FIIP, QSML…GIEV, LAST…VSLF, and LDSA…LLLI.

The protein belongs to the aromatic acid exporter ArAE (TC 2.A.85) family.

It is found in the cell inner membrane. In terms of biological role, forms an efflux pump with AaeA. Could function as a metabolic relief valve, allowing to eliminate certain compounds when they accumulate to high levels in the cell. The polypeptide is p-hydroxybenzoic acid efflux pump subunit AaeB (Yersinia enterocolitica serotype O:8 / biotype 1B (strain NCTC 13174 / 8081)).